The chain runs to 988 residues: Putative disease resistance protein RGA4 (988 aa).

Residues 137–439 form the NB-ARC domain; that stretch reads AAAATRETGF…MAHGFLLSKG (303 aa). 184–191 serves as a coordination point for ATP; sequence GMGGLGKT. 14 LRR repeats span residues 526-548, 549-572, 574-595, 596-620, 638-662, 674-696, 751-776, 784-808, 829-851, 852-876, 878-900, 901-925, 927-950, and 966-988; these read FVSLRVLNLSYSKLEQLPSSIGD, LLHLRYLDLSCNNFRSLPERLCKL, NLQTLDVHNCYSLNCLPKQTSK, LSSLRHLVVDGCPLTSTPPRIGLLT, LGELKNLNLCGSISITHLERVKNDT, LQSLSMSWDNDGPNRYESKEVKV, LPCLENLELQNGSAEVEYVEEDDVHS, FPSLKKLRIWFFRSLKGLMKEEGEE, LSSVKKLEVHGNTNTRGLSSISN, LSTLTSLRIGANYRATSLPEEMFTS, TNLEFLSFFDFKNLKDLPTSLTS, LNALKRLQIESCDSLESFPEQGLEG, TSLTQLFVKYCKMLKCLPEGLQHL, and KRCDKEIGEDWHKIAHIPNLDIH.

The protein belongs to the disease resistance NB-LRR family.

Functionally, disease resistance protein. Resistance proteins guard the plant against pathogens that contain an appropriate avirulence protein via a direct or indirect interaction with this avirulence protein. That triggers a defense system which restricts the pathogen growth. The protein is Putative disease resistance protein RGA4 (RGA4) of Solanum bulbocastanum (Wild potato).